Consider the following 463-residue polypeptide: tRNA (guanine(10)-N(2))-methyltransferase TRMT11 (463 aa).

Residue Ala2 is modified to N-acetylalanine.

The protein belongs to the class I-like SAM-binding methyltransferase superfamily. TRM11 methyltransferase family. Part of the heterodimeric TRMT11-TRM112 methyltransferase complex; this complex forms an active tRNA methyltransferase, where TRMT112 acts as an activator of the catalytic subunit TRMT11.

The protein resides in the cytoplasm. The enzyme catalyses guanosine(10) in tRNA + S-adenosyl-L-methionine = N(2)-methylguanosine(10) in tRNA + S-adenosyl-L-homocysteine + H(+). In terms of biological role, catalytic subunit of the TRMT11-TRM112 methyltransferase complex, that specifically mediates the S-adenosyl-L-methionine-dependent N(2)-methylation of guanosine nucleotide at position 10 (m2G10) in tRNAs. This is one of the major tRNA (guanine-N(2))-methyltransferases. The sequence is that of tRNA (guanine(10)-N(2))-methyltransferase TRMT11 from Rattus norvegicus (Rat).